A 330-amino-acid polypeptide reads, in one-letter code: Adenylate isopentenyltransferase 8, chloroplastic (330 aa).

A chloroplast-targeting transit peptide spans 1-35; that stretch reads MQNLTSTFVSPSMIPITSPRLRLPPPRSVVPMTTV. 50–57 is a binding site for ATP; the sequence is GATGSGKS.

It belongs to the IPP transferase family. As to expression, expressed in roots and in immature seeds with highest expression in the chalazal endosperm.

The protein localises to the plastid. It is found in the chloroplast. It carries out the reaction dimethylallyl diphosphate + ADP = N(6)-(dimethylallyl)adenosine 5'-diphosphate + diphosphate. The enzyme catalyses dimethylallyl diphosphate + ATP = N(6)-(dimethylallyl)adenosine 5'-triphosphate + diphosphate. Functionally, involved in cytokinin biosynthesis. Catalyzes the transfer of an isopentenyl group from dimethylallyl diphosphate (DMAPP) to ATP and ADP. This chain is Adenylate isopentenyltransferase 8, chloroplastic (IPT8), found in Arabidopsis thaliana (Mouse-ear cress).